A 345-amino-acid chain; its full sequence is Anthranilate phosphoribosyltransferase (345 aa).

5-phospho-alpha-D-ribose 1-diphosphate-binding positions include Gly-84, 87–88 (GD), Thr-92, 94–97 (NIST), 112–120 (KHGGRSVSS), and Ser-124. Gly-84 is an anthranilate binding site. Ser-96 contacts Mg(2+). Arg-170 contributes to the anthranilate binding site. Asp-229 and Glu-230 together coordinate Mg(2+).

It belongs to the anthranilate phosphoribosyltransferase family. As to quaternary structure, homodimer. The cofactor is Mg(2+).

It catalyses the reaction N-(5-phospho-beta-D-ribosyl)anthranilate + diphosphate = 5-phospho-alpha-D-ribose 1-diphosphate + anthranilate. It functions in the pathway amino-acid biosynthesis; L-tryptophan biosynthesis; L-tryptophan from chorismate: step 2/5. In terms of biological role, catalyzes the transfer of the phosphoribosyl group of 5-phosphorylribose-1-pyrophosphate (PRPP) to anthranilate to yield N-(5'-phosphoribosyl)-anthranilate (PRA). In Leptothrix cholodnii (strain ATCC 51168 / LMG 8142 / SP-6) (Leptothrix discophora (strain SP-6)), this protein is Anthranilate phosphoribosyltransferase.